A 188-amino-acid chain; its full sequence is Probable chorismate pyruvate-lyase (188 aa).

Residues Arg-77, Leu-115, and Glu-174 each coordinate substrate.

This sequence belongs to the UbiC family.

The protein localises to the cytoplasm. The enzyme catalyses chorismate = 4-hydroxybenzoate + pyruvate. Its pathway is cofactor biosynthesis; ubiquinone biosynthesis. In terms of biological role, removes the pyruvyl group from chorismate, with concomitant aromatization of the ring, to provide 4-hydroxybenzoate (4HB) for the ubiquinone pathway. The polypeptide is Probable chorismate pyruvate-lyase (Shewanella loihica (strain ATCC BAA-1088 / PV-4)).